The primary structure comprises 269 residues: Protein BASIC PENTACYSTEINE3 (269 aa).

It belongs to the BBR/BPC family. In terms of tissue distribution, expressed in seedlings, leaves and pistils. Detected in the base of flowers and tips of carpels, in petal vasculature, in anthers, in young rosette, in the lateral and primary roots, and in the gynobasal portion of the ovule.

It localises to the nucleus. Functionally, transcriptional regulator that specifically binds to GA-rich elements (GAGA-repeats) present in regulatory sequences of genes involved in developmental processes. The sequence is that of Protein BASIC PENTACYSTEINE3 (BPC3) from Arabidopsis thaliana (Mouse-ear cress).